Here is a 506-residue protein sequence, read N- to C-terminus: MDTSTSFPSLFLPTLCTILISYIIIKYVLIWNRSSMAAFNLPPSPPKLPIIGNIHHVFSKNVNQTLWKLSKKYGPVMLIDTGAKSFLVVSSSQMAMEVLKTHQEILSTRPSNEGTKRLSYNFSDITFSPHGDHWRDMRKVFVNEFLGPKRAGWFNQVLRMEIKDVINNLSSNPLNTSINLNEMLLSLVYRVVCKFAFGKSYREEPFNGVTLKEMLDESMVVLAGSSADMFPTFGWILDKLYGWNDRLEKCFGNLDGFFEMIINEHLQSASETSEDEKDFVHSLVELSLKDPQFTKDYIKALLLNVLLGAIDTTFTTIVWAMSEIVKNTQVMQKLQTEIRSCIGRKEEVDATDLTNMAYLKMVIKETLRLHPPAPLLFPRECPSHCKIGGYDVFPGTCVVMNGWGIARDPNVWKEIPNEFYPERFENFNIDFLGNHCEMIPFGAGRRSCPGMKSATSTIEFTLVNLLYWFDWEVPSGMNNQDLDMEEDGFLVIQKKSPLFLIPIKHI.

Residues 10–30 (LFLPTLCTILISYIIIKYVLI) traverse the membrane as a helical segment. N-linked (GlcNAc...) asparagine glycans are attached at residues N32, N63, N121, N168, and N175. A helical membrane pass occupies residues 301 to 321 (LLLNVLLGAIDTTFTTIVWAM). Residue C448 participates in heme binding.

It belongs to the cytochrome P450 family.

It localises to the membrane. The catalysed reaction is (+)-costunolide + reduced [NADPH--hemoprotein reductase] + O2 = parthenolide + oxidized [NADPH--hemoprotein reductase] + H2O + H(+). It functions in the pathway secondary metabolite biosynthesis; terpenoid biosynthesis. Functionally, involved in the biosynthesis of germacrene-derived sesquiterpene lactones. Component of the parthenolide biosynthetic pathway; parthenolide and conjugates are promising anti-cancer drugs highly active against colon cancer cells. Catalyzes the conversion of costunolide to parthenolide. The protein is Parthenolide synthase of Tanacetum parthenium (Feverfew).